The following is a 55-amino-acid chain: Locustin (55 aa).

Disulfide bonds link Cys-5/Cys-40, Cys-7/Cys-36, Cys-10/Cys-32, and Cys-17/Cys-54.

In terms of assembly, monomer. Stored in hemocyte granules and secreted into the hemolymph.

It is found in the secreted. Its function is as follows. Has antibacterial activity against Gram-positive bacterium M.luteus. The chain is Locustin from Locusta migratoria (Migratory locust).